We begin with the raw amino-acid sequence, 268 residues long: Photosystem II 22 kDa protein 1, chloroplastic (268 aa).

Residues 1 to 60 (MAQSMLVSGANGTVAAASTSRLQPVRPTPFSRLVLSQPSSSLGRAVSVKTVALFGRSKTK) constitute a chloroplast transit peptide. 2 repeat units span residues 54–161 (FGRS…FVDD) and 164–268 (VTGL…DDEE). 4 helical membrane-spanning segments follow: residues 99-119 (VAML…KGIL), 133-153 (AEPL…GALG), 199-219 (LFVG…EIIT), and 234-254 (PINE…IAAI).

The protein belongs to the ELIP/psbS family. Expressed at low levels in leaves (at protein level).

The protein resides in the plastid. Its subcellular location is the chloroplast thylakoid membrane. Functionally, involved in high light-mediated energy-dependent nonphotochemical quenching (NPQ, qE) and thermal dissipation (TD) thus regulating energy conversion in photosystem II and protecting from photoinhibition. Also seems to regulate quantum yield of electron transport in fluctuating light conditions. The polypeptide is Photosystem II 22 kDa protein 1, chloroplastic (Oryza sativa subsp. indica (Rice)).